The primary structure comprises 147 residues: Large ribosomal subunit protein uL15 (147 aa).

The disordered stretch occupies residues 1 to 58; sequence MKLFELKPAPGAKKRPKRVGRGESSGHGKTSTRGHKGQWARSGGGVRPGFEGGQMPLT. The segment covering 42 to 52 has biased composition (gly residues); it reads SGGGVRPGFEG.

This sequence belongs to the universal ribosomal protein uL15 family. In terms of assembly, part of the 50S ribosomal subunit.

Binds to the 23S rRNA. The polypeptide is Large ribosomal subunit protein uL15 (Caldicellulosiruptor saccharolyticus (strain ATCC 43494 / DSM 8903 / Tp8T 6331)).